Consider the following 146-residue polypeptide: UPF0260 protein Spea_2441 (146 aa).

Belongs to the UPF0260 family.

The protein is UPF0260 protein Spea_2441 of Shewanella pealeana (strain ATCC 700345 / ANG-SQ1).